We begin with the raw amino-acid sequence, 119 residues long: Large ribosomal subunit protein bL20 (119 aa).

Belongs to the bacterial ribosomal protein bL20 family.

In terms of biological role, binds directly to 23S ribosomal RNA and is necessary for the in vitro assembly process of the 50S ribosomal subunit. It is not involved in the protein synthesizing functions of that subunit. The polypeptide is Large ribosomal subunit protein bL20 (Geobacillus thermodenitrificans (strain NG80-2)).